The chain runs to 679 residues: WD repeat-containing protein 48 homolog (679 aa).

8 WD repeats span residues 26–65 (QHRN…NEKY), 71–110 (HHND…CMST), 113–152 (THRD…ALTA), 164–203 (GSKD…RSMK), 206–245 (GHTE…CIQT), 248–287 (VHKE…NKML), 290–329 (EEKA…RCVL), and 349–388 (KGGA…KKEE). The disordered stretch occupies residues 594-615 (PSAGNANNSLQNSQSDANSEGS).

Belongs to the WD repeat WDR48 family. As to quaternary structure, catalytic component of the Usp12-46 deubiquitylase complex consisting of Usp12-46, Wdr20 and Uaf1; regulatory subunit that, together wtih Wdr20, stabilizes Usp12-46. The Usp12-46 deubiquitylase complex associates with arr/arrow; the interaction leads to deubiquitination and stabilization of arr/arrow.

In terms of biological role, regulatory component of the Usp12-46 deubiquitylase complex. activates deubiquitination by increasing the catalytic turnover without increasing the affinity of deubiquitinating enzymes for the substrate. The complex deubiquitylates the wg/wingless-signaling receptor arr/arrow, which stabilizes the receptor and increases its concentration at the cell surface; this enhances the sensitivity of cells to wg/wingless-signal stimulation. This increases the amplitude and spatial range of the signaling response to the wg/wingless morphogen gradient, facilitating the precise concentration-dependent regulation of its target genes. Together with Wdr20 and Usp12-46 required for wg/wingless-mediated signaling in the wing imaginal disc and for wg/wingless-dependent regulation of intestinal stem cell proliferation. This is WD repeat-containing protein 48 homolog from Drosophila mojavensis (Fruit fly).